A 506-amino-acid polypeptide reads, in one-letter code: Maturase K (506 aa).

The protein belongs to the intron maturase 2 family. MatK subfamily.

The protein localises to the plastid. Its subcellular location is the chloroplast. Its function is as follows. Usually encoded in the trnK tRNA gene intron. Probably assists in splicing its own and other chloroplast group II introns. This Rhododendron tomentosum (Marsh Labrador tea) protein is Maturase K.